A 550-amino-acid chain; its full sequence is MRPQPSPAVPSRCREAPVPRVRAQPVGIPEAQGPVPLHSQQMRLLWGPGRPFLALLLLVSIKQVTGSLLKETTQKWANYKEKCLEDLHNRLSGIFCNGTFDRYVCWPHSYPGNVSVPCPSYLPWWNAESPGRAYRHCLAQGTWQTRENTTDIWQDESECSENHSFRQNVDHYALLYTLQLMYTVGYSVSLISLFLALTLFLFLRKLHCTRNYIHMNLFASFILKVLAVLVKDMVSHNSYSKRPDDESGWMSYLSETSVSCRSVQVLLHYFVGTNHLWLLVEGLYLHTLLEPTVFPERRLWPKYLVVGWAFPMLFVIPWGFARAHLENTRCWATNGNLKIWWIIRGPMLLCVTVNFFIFLKILKLLISKLKAHQMCFRDYKYRLAKSTLLLIPLLGVHEVLFTFFPDDQVQGFSKRIRLFIQLTLSSVHGFLVALQYGFANGEVKAELRKSWGRFLLARHWGCRTCVLGKNFRFLGKCSKKLSEGDGSETLQKLRFSTCSSHLASETLGDVGVQPHRGRGAWPRGSSLSESSEGDFTLANTMEEILEESEI.

Over methionine 1 to alanine 173 the chain is Extracellular. Intrachain disulfides connect cysteine 83–cysteine 105, cysteine 96–cysteine 137, and cysteine 118–cysteine 159. N-linked (GlcNAc...) asparagine glycans are attached at residues asparagine 97, asparagine 113, asparagine 148, and asparagine 162. A helical membrane pass occupies residues leucine 174–threonine 198. The Cytoplasmic segment spans residues leucine 199–arginine 210. The helical transmembrane segment at asparagine 211 to serine 235 threads the bilayer. The Extracellular segment spans residues histidine 236–arginine 261. Residues serine 262–leucine 285 form a helical membrane-spanning segment. The Cytoplasmic segment spans residues histidine 286–leucine 299. Residues tryptophan 300–alanine 321 form a helical membrane-spanning segment. Residues arginine 322–isoleucine 339 lie on the Extracellular side of the membrane. The chain crosses the membrane as a helical span at residues tryptophan 340 to leucine 362. Over lysine 363–serine 386 the chain is Cytoplasmic. Residues threonine 387–proline 405 form a helical membrane-spanning segment. The Extracellular portion of the chain corresponds to aspartate 406–arginine 417. A helical transmembrane segment spans residues leucine 418 to phenylalanine 438. Residues alanine 439 to isoleucine 550 are Cytoplasmic-facing.

Belongs to the G-protein coupled receptor 2 family.

Its subcellular location is the cell membrane. Functionally, this is a receptor for glucagon-like peptide 2. The activity of this receptor is mediated by G proteins which activate adenylyl cyclase. This is Glucagon-like peptide 2 receptor (Glp2r) from Rattus norvegicus (Rat).